The following is a 182-amino-acid chain: Ribosome-recycling factor (182 aa).

Belongs to the RRF family.

It is found in the cytoplasm. Its function is as follows. Responsible for the release of ribosomes from messenger RNA at the termination of protein biosynthesis. May increase the efficiency of translation by recycling ribosomes from one round of translation to another. The chain is Ribosome-recycling factor from Prochlorococcus marinus (strain SARG / CCMP1375 / SS120).